Here is a 165-residue protein sequence, read N- to C-terminus: Protein AIG2 C (165 aa).

Residue 14-19 (YGSILE) coordinates substrate. Residue Glu-82 is the Proton acceptor of the active site.

Belongs to the gamma-glutamylcyclotransferase family. Expressed in floral organs, leaves, stems and roots.

In terms of biological role, putative gamma-glutamylcyclotransferase. The chain is Protein AIG2 C from Arabidopsis thaliana (Mouse-ear cress).